Consider the following 909-residue polypeptide: Lon protease homolog 2, peroxisomal (909 aa).

A Lon N-terminal domain is found at 1-230 (MAPVRAPTAR…KVIELLDRQV (230 aa)). The interval 249-269 (FPMDPDSTKPGKVKPPVKAPG) is disordered. Residue 463–470 (GPPGVGKT) participates in ATP binding. A Lon proteolytic domain is found at 706-893 (TSRPGIVTGL…WEAIRYVWPD (188 aa)). Active-site residues include serine 799 and lysine 842. The Microbody targeting signal signature appears at 907–909 (SRL).

This sequence belongs to the peptidase S16 family.

Its subcellular location is the peroxisome matrix. The protein localises to the cytoplasm. The catalysed reaction is Hydrolysis of proteins in presence of ATP.. In terms of biological role, ATP-dependent serine protease that mediates the selective degradation of misfolded and unassembled polypeptides in the peroxisomal matrix. Necessary for type 2 peroxisome targeting signal (PTS2)-containing protein processing and facilitates peroxisome matrix protein import. The polypeptide is Lon protease homolog 2, peroxisomal (Sordaria macrospora (strain ATCC MYA-333 / DSM 997 / K(L3346) / K-hell)).